Consider the following 486-residue polypeptide: Homoserine O-acetyltransferase (486 aa).

Residues 66-436 (NVLVICHALT…PEGHDAFLLE (371 aa)) form the AB hydrolase-1 domain. The Nucleophile role is filled by serine 162. Residues 248–281 (KFSRRSPSIAQQQKAQREETRKPSTVSEHSLQIH) are disordered. Composition is skewed to polar residues over residues 250-261 (SRRSPSIAQQQK) and 270-280 (PSTVSEHSLQI). Residues aspartate 401 and histidine 430 contribute to the active site.

This sequence belongs to the AB hydrolase superfamily. MetX family.

The protein resides in the cytoplasm. It catalyses the reaction L-homoserine + acetyl-CoA = O-acetyl-L-homoserine + CoA. It functions in the pathway amino-acid biosynthesis; L-methionine biosynthesis via de novo pathway; O-acetyl-L-homoserine from L-homoserine: step 1/1. In terms of biological role, commits homoserine to the methionine biosynthesis pathway by catalyzing its O-acetylation. This is Homoserine O-acetyltransferase (MET2) from Saccharomyces cerevisiae (strain ATCC 204508 / S288c) (Baker's yeast).